The sequence spans 339 residues: Probable geranylgeranyl transferase type-2 subunit beta (339 aa).

PFTB repeat units follow at residues 24–65, 72–113, 120–161, 168–209, 216–257, and 264–306; these read IDKH…YLLK, KNEV…IQYD, INSV…SLLK, CEKA…SILN, IDKL…SAID, and NDKL…SLMG. Residues 194–196 and 236–248 contribute to the geranylgeranyl diphosphate site; these read HAG and RPEK…YSWW. Residues D242, C244, and H294 each contribute to the Zn(2+) site.

This sequence belongs to the protein prenyltransferase subunit beta family. Heterodimer of an alpha and a beta subunit. It depends on Zn(2+) as a cofactor.

The enzyme catalyses geranylgeranyl diphosphate + L-cysteinyl-[protein] = S-geranylgeranyl-L-cysteinyl-[protein] + diphosphate. Catalyzes the transfer of a geranyl-geranyl moiety from geranyl-geranyl pyrophosphate to both cysteines in Rab proteins with an -XXCC, -XCXC and -CCXX C-terminal. The protein is Probable geranylgeranyl transferase type-2 subunit beta (rabggtb) of Dictyostelium discoideum (Social amoeba).